Reading from the N-terminus, the 1578-residue chain is Chitinase ChiA (1578 aa).

A signal peptide spans 1–19 (MKHYYRLLFLLLFPLLASA). The 442-residue stretch at 25–466 (KKVVGYYAQW…NQVDTSFGSV (442 aa)) folds into the GH18 1 domain. Positions 26–446 (KVVGYYAQWS…GGMIWELSQD (421 aa)) are GH18N. Chitin-binding positions include 92 to 93 (DA) and 119 to 122 (GGWT). E162 functions as the Proton donor in the catalytic mechanism. Chitin is bound by residues Y163, 249 to 252 (FGYD), and W441. A CNA-B domain is found at 485–536 (TDVTVELRNASNAVIQTVVSANGNFAFNNLTSGQNYSLTALKATYTFTPVTL). The tract at residues 1142 to 1462 (KIILGYAHSW…GLMTWSVNWD (321 aa)) is GH18C. The region spanning 1142–1483 (KIILGYAHSW…KAYAAYFASQ (342 aa)) is the GH18 2 domain. The Proton donor role is filled by E1264. The interval 1473–1578 (SKAYAAYFAS…KSFKVMNFLN (106 aa)) is CTD.

It belongs to the glycosyl hydrolase 18 family. Chitinase class II subfamily.

The protein localises to the secreted. The enzyme catalyses Random endo-hydrolysis of N-acetyl-beta-D-glucosaminide (1-&gt;4)-beta-linkages in chitin and chitodextrins.. Functionally, major extracellular chitinase, which is essential for chitin utilization. This is Chitinase ChiA (chiA) from Flavobacterium johnsoniae (strain ATCC 17061 / DSM 2064 / JCM 8514 / BCRC 14874 / CCUG 350202 / NBRC 14942 / NCIMB 11054 / UW101) (Cytophaga johnsonae).